A 131-amino-acid polypeptide reads, in one-letter code: Cystatin-like cysteine protease inhibitor EPIC3 (131 aa).

A signal peptide spans 1 to 20 (MAFTRSIALFAGLALAASSA). A glycan (N-linked (GlcNAc...) asparagine) is linked at Asn33. The Secondary area of contact signature appears at 71–75 (QTVAG).

The protein belongs to the cystatin family.

It localises to the secreted. Its function is as follows. Secreted effector that interacts with and inhibits host apoplastic pathogenesis-related papain-like cysteine proteases. Inhibition of host proteases by a pathogen extracellular protease inhibitor forms a specific type of defense-counterdefense mechanism between plants and microbial pathogens. The polypeptide is Cystatin-like cysteine protease inhibitor EPIC3 (Phytophthora infestans (Potato late blight agent)).